The following is a 148-amino-acid chain: Probable histone H2B.1 (148 aa).

The segment covering 1-32 has biased composition (basic and acidic residues); that stretch reads MAPKGEKKPAEKKPAEEKKSTVAEKAPAEKKP. A disordered region spans residues 1-57; that stretch reads MAPKGEKKPAEKKPAEEKKSTVAEKAPAEKKPKAGKKLPKEGGSAAGEKKKKRSKKS. 3 positions are modified to N6-acetyllysine: lysine 7, lysine 36, and lysine 37. Residue lysine 144 forms a Glycyl lysine isopeptide (Lys-Gly) (interchain with G-Cter in ubiquitin) linkage.

It belongs to the histone H2B family. The nucleosome is a histone octamer containing two molecules each of H2A, H2B, H3 and H4 assembled in one H3-H4 heterotetramer and two H2A-H2B heterodimers. The octamer wraps approximately 147 bp of DNA. Can be acetylated to form H2BK6ac, H2BK33ac and H2BK34ac. In terms of processing, monoubiquitinated to form H2BK143ub1; may give a specific tag for epigenetic transcriptional activation.

Its subcellular location is the nucleus. It is found in the chromosome. Functionally, core component of nucleosome. Nucleosomes wrap and compact DNA into chromatin, limiting DNA accessibility to the cellular machineries which require DNA as a template. Histones thereby play a central role in transcription regulation, DNA repair, DNA replication and chromosomal stability. DNA accessibility is regulated via a complex set of post-translational modifications of histones, also called histone code, and nucleosome remodeling. In Medicago truncatula (Barrel medic), this protein is Probable histone H2B.1.